The following is a 1006-amino-acid chain: UPF0182 protein Arth_2749 (1006 aa).

Helical transmembrane passes span 18–38 (GALT…IFFA), 64–84 (IIIF…AIRI), 115–135 (VVMI…AASQ), 168–188 (FLGF…IAGI), 211–231 (QIHL…NFWL), 260–280 (SILA…AVIG), and 287–307 (IGTA…PWVI). Disordered stretches follow at residues 490–519 (GAPE…FTGN), 896–923 (KAGD…GGTD), and 975–1006 (LGSE…SPSN). The span at 495-509 (SPHREQDRPAGKEGD) shows a compositional bias: basic and acidic residues. 2 stretches are compositionally biased toward low complexity: residues 911–923 (AGGS…GGTD) and 979–1000 (GASP…AATP).

The protein belongs to the UPF0182 family.

It is found in the cell membrane. This Arthrobacter sp. (strain FB24) protein is UPF0182 protein Arth_2749.